A 360-amino-acid polypeptide reads, in one-letter code: Glucan endo-1,3-beta-glucosidase B (360 aa).

Positions 1–25 are cleaved as a signal peptide; sequence MATSQIAIIVLLGLLVATNIHITEA. Pyrrolidone carboxylic acid is present on Gln-26. The Proton donor role is filled by Glu-120. Glu-265 serves as the catalytic Nucleophile. The propeptide at 341-360 is removed in mature form; the sequence is VSERVWDITNSTASSLTSEI. The N-linked (GlcNAc...) asparagine glycan is linked to Asn-350.

This sequence belongs to the glycosyl hydrolase 17 family.

It localises to the vacuole. The catalysed reaction is Hydrolysis of (1-&gt;3)-beta-D-glucosidic linkages in (1-&gt;3)-beta-D-glucans.. In terms of biological role, implicated in the defense of plants against pathogens. In Solanum lycopersicum (Tomato), this protein is Glucan endo-1,3-beta-glucosidase B.